Reading from the N-terminus, the 345-residue chain is Metal-dependent phosphohydrolase cns2 (345 aa).

One can recognise an HD domain in the interval Arg70–Ala171.

In terms of assembly, interacts with cns1.

Its subcellular location is the lipid droplet. The protein operates within secondary metabolite biosynthesis. In terms of biological role, metal-dependent phosphohydrolase; part of the gene cluster that mediates the biosynthesis of cordycepin (COR) and pentostatin (PTN), two adenosine analogs with related bioactivity profiles as both mimic adenosine and can inhibit some of the processes that are adenosine dependent. Within the pathway, cns2 catalyzes dephosphorylation of 3'-AMP to produce 2'-carbonyl-3'-deoxyadenosine (2'-C-3'-dA). The first step of cordycepin biosynthesis involves hydroxyl phosphorylation of the 3'-OH position on adenosine to produce adenosine-3'-monophosphate (3'-AMP), catalyzed by kinase activity of cns3. Next, 3'-AMP is dephosphorylated to 2'-carbonyl-3'-deoxyadenosine by cns2, which is finally converted to cordycepin (3'-deoxyadenosine) by the oxidoreductase cns1. The protein is Metal-dependent phosphohydrolase cns2 of Cordyceps militaris (strain CM01) (Caterpillar fungus).